Consider the following 675-residue polypeptide: NADH-ubiquinone oxidoreductase chain 5 (675 aa).

A run of 19 helical transmembrane segments spans residues 3–23 (LLPLLFPLLNLFISCILGKFL), 27–47 (VLFVLVINMLFSAIFSFWIFY), 75–95 (FLFDSITSVMLVLVVFVSLLV), 108–127 (HIIRFLGYLSLFTFFMLMLV), 132–154 (FVQLFLGWEGVGLSSYLLINFWY), 177–197 (IYFSLLVIFFFFKSFDFGVVF), 211–231 (FLGFSLNRVDLIVIFLFLGAI), 251–271 (TPVSALIHAATMVTAGVFVLI), 284–304 (LFLVSLIGGLTALFAGTVGLV), 311–329 (VIAYSTCSQLGYMFFACGM), 334–354 (VGLFHLFNHGFFKALLFLGAG), 380–400 (YVAILVGSLSLTGFPFLTGFY), 413–433 (FSINSFFIYWLGVFAAFITSF), 462–482 (SFIFYVLAFLGFLSIFIGFIF), 519–539 (LIPLVFSIVGLFFSLFVYFVI), 564–584 (YFDLLYNNIFVFNLLSSFYLL), 593–613 (LIELFGPLSFVRLINKSSIIF), 624–644 (YIFVVLLGLMFFIKLTSSLFF), and 649–669 (SFFNFGLFICLLSLIIFLSFG).

This sequence belongs to the complex I subunit 5 family.

Its subcellular location is the mitochondrion inner membrane. It catalyses the reaction a ubiquinone + NADH + 5 H(+)(in) = a ubiquinol + NAD(+) + 4 H(+)(out). Its function is as follows. Core subunit of the mitochondrial membrane respiratory chain NADH dehydrogenase (Complex I) that is believed to belong to the minimal assembly required for catalysis. Complex I functions in the transfer of electrons from NADH to the respiratory chain. The immediate electron acceptor for the enzyme is believed to be ubiquinone. This Acanthamoeba castellanii (Amoeba) protein is NADH-ubiquinone oxidoreductase chain 5 (ND5).